Reading from the N-terminus, the 205-residue chain is Superoxide dismutase [Fe] (205 aa).

Fe cation-binding residues include H33, H81, D167, and H171.

It belongs to the iron/manganese superoxide dismutase family. As to quaternary structure, homotetramer. Requires Fe cation as cofactor.

It carries out the reaction 2 superoxide + 2 H(+) = H2O2 + O2. Its function is as follows. Destroys superoxide anion radicals which are normally produced within the cells and which are toxic to biological systems. The chain is Superoxide dismutase [Fe] (sod) from Methanothermobacter thermautotrophicus (strain ATCC 29096 / DSM 1053 / JCM 10044 / NBRC 100330 / Delta H) (Methanobacterium thermoautotrophicum).